A 365-amino-acid polypeptide reads, in one-letter code: MLPPLPSRLGLLLLLLLCPAHVGGLWWAVGSPLVMDPTSICRKARRLAGRQAELCQAEPEVVAELARGARLGVRECQFQFRFRRWNCSSHSKAFGRILQQDIRETAFVFAITAAGASHAVTQACSMGELLQCGCQAPRGRAPPRPSGLPGTPGPPGPAGSPEGSAAWEWGGCGDDVDFGDEKSRLFMDARHKRGRGDIRALVQLHNNEAGRLAVRSHTRTECKCHGLSGSCALRTCWQKLPPFREVGARLLERFHGASRVMGTNDGKALLPAVRTLKPPGRADLLYAADSPDFCAPNRRTGSPGTRGRACNSSAPDLSGCDLLCCGRGHRQESVQLEENCLCRFHWCCVVQCHRCRVRKELSLCL.

A signal peptide spans Met-1–Gly-24. Intrachain disulfides connect Cys-76-Cys-87, Cys-124-Cys-132, Cys-134-Cys-172, Cys-222-Cys-236, Cys-224-Cys-231, Cys-294-Cys-325, Cys-310-Cys-320, Cys-324-Cys-364, Cys-340-Cys-355, Cys-342-Cys-352, and Cys-347-Cys-348. N-linked (GlcNAc...) asparagine glycosylation is present at Asn-86. Residues Arg-140–Ala-158 show a composition bias toward pro residues. The tract at residues Arg-140–Ser-164 is disordered. A lipid anchor (O-palmitoleoyl serine; by PORCN) is attached at Ser-228. Asn-311 carries N-linked (GlcNAc...) asparagine glycosylation.

This sequence belongs to the Wnt family. As to quaternary structure, interacts with PORCN. In terms of processing, palmitoleoylation is required for efficient binding to frizzled receptors. Depalmitoleoylation leads to Wnt signaling pathway inhibition. As to expression, expressed in gastric cancer cell lines and gastric cancer tissues (at protein level). Detected in the apical gland region of the gastric foveolar epithelium (at protein level).

The protein resides in the secreted. It is found in the extracellular space. It localises to the extracellular matrix. Functionally, ligand for members of the frizzled family of seven transmembrane receptors. Probable developmental protein. May be a signaling molecule which affects the development of discrete regions of tissues. Is likely to signal over only few cell diameters. Together with CAV1 may promote chemoresistance of gastric cancer cells to DNA-damaging anthracycline drugs through the activation of the canonical Wnt receptor signaling pathway. This is Protein Wnt-6 (WNT6) from Homo sapiens (Human).